The chain runs to 323 residues: Malate dehydrogenase (323 aa).

11 to 17 (GAAGQIA) contributes to the NAD(+) binding site. Residues arginine 92 and arginine 98 each contribute to the substrate site. NAD(+) contacts are provided by residues asparagine 105, glutamine 112, and 129–131 (VGN). Substrate is bound by residues asparagine 131 and arginine 162. The active-site Proton acceptor is histidine 187.

This sequence belongs to the LDH/MDH superfamily. MDH type 2 family.

It catalyses the reaction (S)-malate + NAD(+) = oxaloacetate + NADH + H(+). Catalyzes the reversible oxidation of malate to oxaloacetate. The sequence is that of Malate dehydrogenase from Corynebacterium efficiens (strain DSM 44549 / YS-314 / AJ 12310 / JCM 11189 / NBRC 100395).